The primary structure comprises 450 residues: Chromosomal replication initiator protein DnaA (450 aa).

The interval 1–84 is domain I, interacts with DnaA modulators; the sequence is MTENEQIFWN…AVDYVYEEDL (84 aa). Residues 84-109 are domain II; that stretch reads LIIEQQHQGQQGYTEQAFQQLPAVQS. The interval 110–328 is domain III, AAA+ region; it reads DLNPKYSFDN…GALKDISLVA (219 aa). ATP contacts are provided by glycine 154, glycine 156, lysine 157, and threonine 158. Positions 329-450 are domain IV, binds dsDNA; the sequence is NFKQIDTITV…EIETIKNKIK (122 aa).

Belongs to the DnaA family. Oligomerizes as a right-handed, spiral filament on DNA at oriC.

It is found in the cytoplasm. Functionally, plays an essential role in the initiation and regulation of chromosomal replication. ATP-DnaA binds to the origin of replication (oriC) to initiate formation of the DNA replication initiation complex once per cell cycle. Binds the DnaA box (a 9 base pair repeat at the origin) and separates the double-stranded (ds)DNA. Forms a right-handed helical filament on oriC DNA; dsDNA binds to the exterior of the filament while single-stranded (ss)DNA is stabiized in the filament's interior. The ATP-DnaA-oriC complex binds and stabilizes one strand of the AT-rich DNA unwinding element (DUE), permitting loading of DNA polymerase. After initiation quickly degrades to an ADP-DnaA complex that is not apt for DNA replication. Binds acidic phospholipids. The sequence is that of Chromosomal replication initiator protein DnaA from Streptococcus equi subsp. zooepidemicus (strain MGCS10565).